Consider the following 132-residue polypeptide: Small ribosomal subunit protein uS8 (132 aa).

It belongs to the universal ribosomal protein uS8 family. In terms of assembly, part of the 30S ribosomal subunit. Contacts proteins S5 and S12.

Its function is as follows. One of the primary rRNA binding proteins, it binds directly to 16S rRNA central domain where it helps coordinate assembly of the platform of the 30S subunit. The polypeptide is Small ribosomal subunit protein uS8 (Levilactobacillus brevis (strain ATCC 367 / BCRC 12310 / CIP 105137 / JCM 1170 / LMG 11437 / NCIMB 947 / NCTC 947) (Lactobacillus brevis)).